The following is a 1301-amino-acid chain: Tyrosine-protein phosphatase 99A (1301 aa).

The first 28 residues, 1–28 (MPRPQHHALLRAMLKLLLFASIAEHCAT), serve as a signal peptide directing secretion. Residues 29-394 (ALPTNSSNSP…RQSHNDYNLA (366 aa)) lie on the Extracellular side of the membrane. The segment at 31-63 (PTNSSNSPSSPSPFTVASLPPTTASSSSSPAVI) is disordered. Residue asparagine 33 is glycosylated (N-linked (GlcNAc...) asparagine). Residues 33-63 (NSSNSPSSPSPFTVASLPPTTASSSSSPAVI) are compositionally biased toward low complexity. Fibronectin type-III domains are found at residues 66 to 165 (SSFD…YAAV), 173 to 269 (KPQN…TDVG), and 270 to 376 (GPSA…LQPN). Asparagine 176, asparagine 212, asparagine 278, asparagine 322, and asparagine 336 each carry an N-linked (GlcNAc...) asparagine glycan. A helical membrane pass occupies residues 395-415 (VLVGIIFSCFGIILIIMAFFL). Residues 416–1301 (WSRKCFHAAY…TDAQNLDIVG (886 aa)) lie on the Cytoplasmic side of the membrane. Tyrosine-protein phosphatase domains lie at 476-741 (FSRE…LVEA) and 764-1016 (LEQQ…LSFL). Cysteine 682 functions as the Phosphocysteine intermediate in the catalytic mechanism. Positions 1092–1106 (TALNETVSTPSTDTN) are enriched in polar residues. Disordered regions lie at residues 1092–1199 (TALN…PTIP) and 1257–1281 (VGDL…NNHI). Over residues 1107 to 1130 (PSLLPILSLLPPTVAPLSSSSSTT) the composition is skewed to low complexity. A compositionally biased stretch (pro residues) spans 1131–1142 (PPTPSTPTPQPP). Residues 1150–1161 (HSPSDLSHQISS) show a composition bias toward polar residues. The span at 1162 to 1188 (TVANAASPVTPATASASAGATPTTPMT) shows a compositional bias: low complexity. Over residues 1264–1273 (NADNSPTASP) the composition is skewed to polar residues.

This sequence belongs to the protein-tyrosine phosphatase family. Receptor class subfamily. In terms of tissue distribution, selectively expressed in a subset of axons and pioneer neurons (including aCC and RP2) in the embryo.

It localises to the membrane. The catalysed reaction is O-phospho-L-tyrosyl-[protein] + H2O = L-tyrosyl-[protein] + phosphate. In terms of biological role, may play a key role in signal transduction and growth control. May have a role in the establishment of the intersegmental and segmental nerves. The sequence is that of Tyrosine-protein phosphatase 99A (Ptp99A) from Drosophila melanogaster (Fruit fly).